The sequence spans 351 residues: LIKELVNMVIQHAEEEEVKELKNPCECPRALHRVCGSDGNTYSNPCMLNCAKHEGNPDLVQVHKGPCDEHDHDFEDPCKCDNKFEPVCGDDQITYLNLCHLECATFTTSPGVEVAYEGECHAETTNAMEVLFQGNPCECPRALHRVCGSDGNTYSNPCMLTCAKHEGNPDLVQVHEGPCDEHDHDFEDTCQCDDTFQPVCGDDEITYRNLCHLECATFTTSPGVEVKHEGECHPETKVNQLILKSCMCPKIYKPVCGTDGRTYPNICVLKCHISSNPGLGLAHLGECKVAVLAKETGEVRNPCNCFRNFNPVCGTDGKTYGNLCMLGCAAETKVPGLKLLHNGRCLPKEQL.

A propeptide spanning residues 1–131 (LIKELVNMVI…AETTNAMEVL (131 aa)) is cleaved from the precursor. Kazal-like domains lie at 19–69 (KELK…PCDE), 72–122 (HDFE…ECHA), 131–181 (LFQG…PCDE), 184–234 (HDFE…ECHP), 240–289 (QLIL…ECKV), and 297–347 (GEVR…RCLP). 18 disulfides stabilise this stretch: C25-C50, C27-C46, C35-C67, C78-C103, C80-C99, C88-C120, C137-C162, C139-C158, C147-C179, C190-C215, C192-C211, C200-C232, C246-C271, C248-C267, C256-C287, C303-C328, C305-C324, and C313-C345.

The protein localises to the secreted. In terms of biological role, thrombin inhibitor. Prevents blood clotting to allow insect to feed on blood. Also functions as an inhibitor of trypsin and plasmin. This chain is Serine protease inhibitor dipetalogastin, found in Dipetalogaster maximus (Blood-sucking bug).